Here is a 109-residue protein sequence, read N- to C-terminus: uncharacterized protein (109 aa).

Positions 1–25 (METKPNALTGTSLSSTSGQTTQKSI) are disordered. A compositionally biased stretch (low complexity) spans 8–22 (LTGTSLSSTSGQTTQ). A helical membrane pass occupies residues 42-62 (TFGLMAILNLALLLWTLLATL). The tract at residues 84-109 (TTLQKNTPSAKNGLKNTTNKHSHEDM) is disordered. Over residues 91–102 (PSAKNGLKNTTN) the composition is skewed to polar residues.

It localises to the host membrane. This is an uncharacterized protein from Bdellovibrio phage phiMH2K (Bacteriophage phiMH2K).